The chain runs to 371 residues: Ubiquitin receptor RAD23b (371 aa).

In terms of domain architecture, Ubiquitin-like spans 1–79; sequence MKLTVKTLKG…LVVMLSKSKS (79 aa). A compositionally biased stretch (low complexity) spans 79 to 117; sequence SGGSAGQASVQTSSVSQPVSATTSSTKPAAPSTTQSSPV. Residues 79–142 form a disordered region; sequence SGGSAGQASV…DTYGQAASTL (64 aa). The segment covering 128–142 has biased composition (polar residues); sequence PAAQTDTYGQAASTL. Positions 146–189 constitute a UBA 1 domain; sequence SSLEQMVQQIMEMGGGSWDKETVTRALRAAYNNPERAVDYLYSG. Residues 242-285 form the STI1 domain; it reads GTLEFLRNNDQFQQLRTMVHSNPQILQPMLQELGKQNPQLLRLI. The UBA 2 domain maps to 325-365; sequence PAEQEAIQRLEAMGFDRALVIEAFLACDRNEELAANYLLEN.

It belongs to the RAD23 family. As to quaternary structure, interacts with 'Lys-48'-linked polyubiquitin chains. Interacts with RPN10 via its ubiquitin-like domain. Interacts with UBQ1, UBQ2, UBQ5, UBQ7, UBQ10, UBQ11 and IAA16. Binds to RAD4. Widely expressed in the whole plant.

It is found in the nucleus. The protein resides in the cytoplasm. May be involved in nucleotide excision repair. Binds and presumably selects ubiquitin-conjugates for destruction. Prefers multiubiquitin chains rather than single ubiquitins, with a binding affinity for 'Lys-48'-linked ubiquitin chains. Acts as a ubiquitin receptor that associates with the 26S proteasomal docking subunit RPN10 for the indirect recognition of ubiquitinated substrates of ubiquitin/26S proteasome-mediated proteolysis (UPP). Involved in UV tolerance in both roots and hypocotyls, specifically in dark conditions. This is Ubiquitin receptor RAD23b from Arabidopsis thaliana (Mouse-ear cress).